Consider the following 209-residue polypeptide: Ribosomal RNA large subunit methyltransferase E (209 aa).

S-adenosyl-L-methionine contacts are provided by Gly-63, Trp-65, Asp-83, Asp-99, and Asp-124. Residue Lys-164 is the Proton acceptor of the active site.

Belongs to the class I-like SAM-binding methyltransferase superfamily. RNA methyltransferase RlmE family.

It is found in the cytoplasm. The catalysed reaction is uridine(2552) in 23S rRNA + S-adenosyl-L-methionine = 2'-O-methyluridine(2552) in 23S rRNA + S-adenosyl-L-homocysteine + H(+). Specifically methylates the uridine in position 2552 of 23S rRNA at the 2'-O position of the ribose in the fully assembled 50S ribosomal subunit. This is Ribosomal RNA large subunit methyltransferase E from Shewanella oneidensis (strain ATCC 700550 / JCM 31522 / CIP 106686 / LMG 19005 / NCIMB 14063 / MR-1).